The sequence spans 681 residues: Protein asunder (681 aa).

Residues 574–619 (PGASHLRSYTESPLSPERLEPTSSASNSSSSILKASKRRMSSSGQR) are disordered. Residues 606-612 (LKASKRR) carry the Nuclear localization signal (NLS) motif.

This sequence belongs to the Integrator subunit 13 family. As to quaternary structure, belongs to the multiprotein complex Integrator, at least composed of IntS1, IntS2, IntS3, IntS4, omd/IntS5, IntS6, defl/IntS7, IntS8, IntS9, IntS10, IntS11, IntS12, asun/IntS13, IntS14 and IntS15. The core complex associates with protein phosphatase 2A subunits mts/PP2A and Pp2A-29B, to form the Integrator-PP2A (INTAC) complex. Post-translationally, phosphorylated.

Its subcellular location is the nucleus. It is found in the cytoplasm. The protein localises to the perinuclear region. Its function is as follows. Component of the integrator complex, a multiprotein complex that terminates RNA polymerase II (Pol II) transcription in the promoter-proximal region of genes. The integrator complex provides a quality checkpoint during transcription elongation by driving premature transcription termination of transcripts that are unfavorably configured for transcriptional elongation: the complex terminates transcription by (1) catalyzing dephosphorylation of the C-terminal domain (CTD) of Pol II subunit Polr2A/Rbp1 and Spt5, and (2) degrading the exiting nascent RNA transcript via endonuclease activity. The integrator complex is also involved in the 3'-end processing of the U7 snRNA, and also the spliceosomal snRNAs U1, U2, U4 and U5. The polypeptide is Protein asunder (asun) (Drosophila virilis (Fruit fly)).